Here is a 256-residue protein sequence, read N- to C-terminus: Glutamate racemase (256 aa).

Residues Asp-12–Ser-13 and Tyr-44–Gly-45 contribute to the substrate site. The active-site Proton donor/acceptor is the Cys-75. Substrate is bound at residue Asn-76–Thr-77. The Proton donor/acceptor role is filled by Cys-186. Thr-187–His-188 is a binding site for substrate.

Belongs to the aspartate/glutamate racemases family.

The enzyme catalyses L-glutamate = D-glutamate. Its pathway is cell wall biogenesis; peptidoglycan biosynthesis. In terms of biological role, provides the (R)-glutamate required for cell wall biosynthesis. In Clostridium acetobutylicum (strain ATCC 824 / DSM 792 / JCM 1419 / IAM 19013 / LMG 5710 / NBRC 13948 / NRRL B-527 / VKM B-1787 / 2291 / W), this protein is Glutamate racemase.